A 174-amino-acid chain; its full sequence is Cytochrome c-type biogenesis protein CcmE (174 aa).

Residues 1 to 8 (MNPRRKSR) lie on the Cytoplasmic side of the membrane. The chain crosses the membrane as a helical; Signal-anchor for type II membrane protein span at residues 9-29 (LSVVLFIFLGISVASALVLYA). The Periplasmic segment spans residues 30–174 (LRQNIDLFYT…QEKQFKEGNQ (145 aa)). The heme site is built by His-131 and Tyr-135. The disordered stretch occupies residues 149–174 (KPMGISDLKNESDRDRQEKQFKEGNQ). The segment covering 156–174 (LKNESDRDRQEKQFKEGNQ) has biased composition (basic and acidic residues).

This sequence belongs to the CcmE/CycJ family.

It localises to the cell inner membrane. In terms of biological role, heme chaperone required for the biogenesis of c-type cytochromes. Transiently binds heme delivered by CcmC and transfers the heme to apo-cytochromes in a process facilitated by CcmF and CcmH. In Histophilus somni (strain 129Pt) (Haemophilus somnus), this protein is Cytochrome c-type biogenesis protein CcmE.